A 206-amino-acid polypeptide reads, in one-letter code: Large ribosomal subunit protein uL4 (206 aa).

A compositionally biased stretch (basic and acidic residues) spans 48 to 59 (THDTKTRSEVRG). The segment at 48 to 77 (THDTKTRSEVRGGGRKPWRQKGTGRARHGS) is disordered. Over residues 60–77 (GGRKPWRQKGTGRARHGS) the composition is skewed to basic residues.

The protein belongs to the universal ribosomal protein uL4 family. Part of the 50S ribosomal subunit.

In terms of biological role, one of the primary rRNA binding proteins, this protein initially binds near the 5'-end of the 23S rRNA. It is important during the early stages of 50S assembly. It makes multiple contacts with different domains of the 23S rRNA in the assembled 50S subunit and ribosome. Forms part of the polypeptide exit tunnel. This Pelotomaculum thermopropionicum (strain DSM 13744 / JCM 10971 / SI) protein is Large ribosomal subunit protein uL4.